Consider the following 547-residue polypeptide: CTP synthase (547 aa).

The segment at 1 to 265 is amidoligase domain; sequence MARFIFITGG…DQAVLDAFQI (265 aa). Serine 13 is a CTP binding site. Residue serine 13 participates in UTP binding. Residues 14 to 19 and aspartate 71 contribute to the ATP site; that span reads SLGKGL. Mg(2+) is bound by residues aspartate 71 and glutamate 139. CTP is bound by residues 146 to 148, 186 to 191, and lysine 222; these read DIE and KTKPTQ. Residues 186 to 191 and lysine 222 each bind UTP; that span reads KTKPTQ. One can recognise a Glutamine amidotransferase type-1 domain in the interval 291–546; sequence KIAIVGKYVQ…VRAAKESSRL (256 aa). Residue glycine 353 coordinates L-glutamine. Catalysis depends on cysteine 380, which acts as the Nucleophile; for glutamine hydrolysis. L-glutamine-binding positions include 381-384, glutamate 404, and arginine 474; that span reads LGMQ. Catalysis depends on residues histidine 519 and glutamate 521.

This sequence belongs to the CTP synthase family. Homotetramer.

It carries out the reaction UTP + L-glutamine + ATP + H2O = CTP + L-glutamate + ADP + phosphate + 2 H(+). The catalysed reaction is L-glutamine + H2O = L-glutamate + NH4(+). The enzyme catalyses UTP + NH4(+) + ATP = CTP + ADP + phosphate + 2 H(+). It functions in the pathway pyrimidine metabolism; CTP biosynthesis via de novo pathway; CTP from UDP: step 2/2. With respect to regulation, allosterically activated by GTP, when glutamine is the substrate; GTP has no effect on the reaction when ammonia is the substrate. The allosteric effector GTP functions by stabilizing the protein conformation that binds the tetrahedral intermediate(s) formed during glutamine hydrolysis. Inhibited by the product CTP, via allosteric rather than competitive inhibition. In terms of biological role, catalyzes the ATP-dependent amination of UTP to CTP with either L-glutamine or ammonia as the source of nitrogen. Regulates intracellular CTP levels through interactions with the four ribonucleotide triphosphates. In Ruegeria pomeroyi (strain ATCC 700808 / DSM 15171 / DSS-3) (Silicibacter pomeroyi), this protein is CTP synthase.